The chain runs to 433 residues: F-box only protein 15 (433 aa).

The 41-residue stretch at 1-41 (MPSEILVKILSYLDAVTLVCIGCVSRRFYHLADDNLIWVRK) folds into the F-box domain.

In terms of assembly, directly interacts with SKP1 and CUL1. As to expression, expressed in testis.

Substrate-recognition component of the SCF (SKP1-CUL1-F-box protein)-type E3 ubiquitin ligase complex. This Mus musculus (Mouse) protein is F-box only protein 15 (Fbxo15).